The following is a 79-amino-acid chain: Conotoxin TsMSGL-2 (79 aa).

The N-terminal stretch at 1–24 (MSGLGIMVLTLLLLVFMATSHQDA) is a signal peptide. The propeptide occupies 25–46 (GEKQATQRDAVNVRRRRSIAGR). Cystine bridges form between Cys52/Cys64, Cys56/Cys73, and Cys63/Cys77. Leu78 carries the post-translational modification Leucine amide.

Belongs to the conotoxin O3 superfamily. In terms of tissue distribution, expressed by the venom duct.

Its subcellular location is the secreted. The protein is Conotoxin TsMSGL-2 of Conus tessulatus (Tessellate cone).